The primary structure comprises 92 residues: Large ribosomal subunit protein bL25 (92 aa).

Belongs to the bacterial ribosomal protein bL25 family. Part of the 50S ribosomal subunit; part of the 5S rRNA/L5/L18/L25 subcomplex. Contacts the 5S rRNA. Binds to the 5S rRNA independently of L5 and L18.

This is one of the proteins that binds to the 5S RNA in the ribosome where it forms part of the central protuberance. The polypeptide is Large ribosomal subunit protein bL25 (Aliivibrio salmonicida (strain LFI1238) (Vibrio salmonicida (strain LFI1238))).